Here is a 132-residue protein sequence, read N- to C-terminus: Fatty acid-binding protein type 3 (132 aa).

The protein belongs to the calycin superfamily. Fatty-acid binding protein (FABP) family.

In Fasciola hepatica (Liver fluke), this protein is Fatty acid-binding protein type 3.